We begin with the raw amino-acid sequence, 295 residues long: 2S seed storage protein (295 aa).

The N-terminal stretch at 1-20 (MAKQIVLALAFAALVAFATA) is a signal peptide. Positions 21–161 (HTTIITTTIE…TITTTVTESN (141 aa)) are excised as a propeptide. The span at 195–208 (EQQMQQSPRSTRPY) shows a compositional bias: polar residues. Residues 195-215 (EQQMQQSPRSTRPYQQRPGQQ) form a disordered region.

The protein belongs to the 2S seed storage albumins family. Post-translationally, the 38 kDa precursor may be cleaved into two polypeptides of approximately the same size. The mature protein is composed of a single polypeptide containing one or more intra-molecular disulfide linkages.

In terms of biological role, this is a 2S seed storage protein. This Helianthus annuus (Common sunflower) protein is 2S seed storage protein (HAG5).